A 327-amino-acid chain; its full sequence is Phenylalanine--tRNA ligase alpha subunit (327 aa).

E252 is a Mg(2+) binding site.

The protein belongs to the class-II aminoacyl-tRNA synthetase family. Phe-tRNA synthetase alpha subunit type 1 subfamily. In terms of assembly, tetramer of two alpha and two beta subunits. Mg(2+) serves as cofactor.

The protein resides in the cytoplasm. The enzyme catalyses tRNA(Phe) + L-phenylalanine + ATP = L-phenylalanyl-tRNA(Phe) + AMP + diphosphate + H(+). In Vibrio cholerae serotype O1 (strain ATCC 39541 / Classical Ogawa 395 / O395), this protein is Phenylalanine--tRNA ligase alpha subunit.